The chain runs to 57 residues: Large ribosomal subunit protein bL32 (57 aa).

Residues 1–21 (MAVQQRRSSKHRRDKRRSHDA) are disordered. The span at 7–18 (RSSKHRRDKRRS) shows a compositional bias: basic residues.

The protein belongs to the bacterial ribosomal protein bL32 family.

The sequence is that of Large ribosomal subunit protein bL32 (rpmF) from Mycoplasma pneumoniae (strain ATCC 29342 / M129 / Subtype 1) (Mycoplasmoides pneumoniae).